Consider the following 435-residue polypeptide: Elongation factor 1-alpha (435 aa).

The tr-type G domain maps to 4–227 (KPHLNLIVIG…YLDQLELPPK (224 aa)). Residues 13–20 (GHIDHGKS) are G1. 13-20 (GHIDHGKS) lines the GTP pocket. Mg(2+) is bound at residue serine 20. The G2 stretch occupies residues 69-73 (GVTIN). The G3 stretch occupies residues 90-93 (DAPG). Residues 90 to 94 (DAPGH) and 152 to 155 (NKMD) contribute to the GTP site. Residues 152 to 155 (NKMD) are G4. Residues 193-195 (VAP) form a G5 region.

It belongs to the TRAFAC class translation factor GTPase superfamily. Classic translation factor GTPase family. EF-Tu/EF-1A subfamily.

The protein localises to the cytoplasm. The enzyme catalyses GTP + H2O = GDP + phosphate + H(+). In terms of biological role, GTP hydrolase that promotes the GTP-dependent binding of aminoacyl-tRNA to the A-site of ribosomes during protein biosynthesis. In Saccharolobus solfataricus (strain ATCC 35092 / DSM 1617 / JCM 11322 / P2) (Sulfolobus solfataricus), this protein is Elongation factor 1-alpha.